The following is a 193-amino-acid chain: ER membrane protein complex subunit 4 (193 aa).

2 consecutive transmembrane segments (helical) span residues 91–111 (ILAYMSGNSLQIFSIMTTLML) and 137–157 (LWPAMGAYILFQLLLMGIGVY).

This sequence belongs to the EMC4 family.

The protein localises to the endoplasmic reticulum membrane. In Schizosaccharomyces pombe (strain 972 / ATCC 24843) (Fission yeast), this protein is ER membrane protein complex subunit 4.